The primary structure comprises 373 residues: tRNA-specific 2-thiouridylase MnmA (373 aa).

Residues 12-19 (GMSGGVDS) and Met38 each bind ATP. The interaction with target base in tRNA stretch occupies residues 98–100 (NPD). Cys103 functions as the Nucleophile in the catalytic mechanism. A disulfide bond links Cys103 and Cys200. Gly127 is an ATP binding site. The tract at residues 150–152 (KDQ) is interaction with tRNA. The active-site Cysteine persulfide intermediate is the Cys200. Residues 312–313 (RY) form an interaction with tRNA region.

Belongs to the MnmA/TRMU family.

It localises to the cytoplasm. The catalysed reaction is S-sulfanyl-L-cysteinyl-[protein] + uridine(34) in tRNA + AH2 + ATP = 2-thiouridine(34) in tRNA + L-cysteinyl-[protein] + A + AMP + diphosphate + H(+). Functionally, catalyzes the 2-thiolation of uridine at the wobble position (U34) of tRNA, leading to the formation of s(2)U34. This is tRNA-specific 2-thiouridylase MnmA from Streptococcus pneumoniae (strain CGSP14).